A 338-amino-acid chain; its full sequence is Dihydroorotate dehydrogenase (quinone) (338 aa).

FMN-binding positions include 68-72 (AGMDK) and Thr92. Substrate is bound at residue Lys72. 117 to 121 (NRMGF) serves as a coordination point for substrate. 2 residues coordinate FMN: Ser147 and Asn180. Asn180 contributes to the substrate binding site. Residue Ser183 is the Nucleophile of the active site. Asn185 lines the substrate pocket. 2 residues coordinate FMN: Lys214 and Thr242. A substrate-binding site is contributed by 243 to 244 (NT). FMN is bound by residues Gly267, Gly296, and 317–318 (YT).

This sequence belongs to the dihydroorotate dehydrogenase family. Type 2 subfamily. As to quaternary structure, monomer. The cofactor is FMN.

Its subcellular location is the cell membrane. It carries out the reaction (S)-dihydroorotate + a quinone = orotate + a quinol. The protein operates within pyrimidine metabolism; UMP biosynthesis via de novo pathway; orotate from (S)-dihydroorotate (quinone route): step 1/1. Functionally, catalyzes the conversion of dihydroorotate to orotate with quinone as electron acceptor. The chain is Dihydroorotate dehydrogenase (quinone) from Salinispora arenicola (strain CNS-205).